A 258-amino-acid chain; its full sequence is Imidazole glycerol phosphate synthase subunit HisF (258 aa).

Catalysis depends on residues Asp11 and Asp130.

It belongs to the HisA/HisF family. In terms of assembly, heterodimer of HisH and HisF.

The protein resides in the cytoplasm. The catalysed reaction is 5-[(5-phospho-1-deoxy-D-ribulos-1-ylimino)methylamino]-1-(5-phospho-beta-D-ribosyl)imidazole-4-carboxamide + L-glutamine = D-erythro-1-(imidazol-4-yl)glycerol 3-phosphate + 5-amino-1-(5-phospho-beta-D-ribosyl)imidazole-4-carboxamide + L-glutamate + H(+). Its pathway is amino-acid biosynthesis; L-histidine biosynthesis; L-histidine from 5-phospho-alpha-D-ribose 1-diphosphate: step 5/9. Its function is as follows. IGPS catalyzes the conversion of PRFAR and glutamine to IGP, AICAR and glutamate. The HisF subunit catalyzes the cyclization activity that produces IGP and AICAR from PRFAR using the ammonia provided by the HisH subunit. This is Imidazole glycerol phosphate synthase subunit HisF from Escherichia coli O7:K1 (strain IAI39 / ExPEC).